The sequence spans 359 residues: WAT1-related protein At5g64700 (359 aa).

Transmembrane regions (helical) follow at residues 10 to 30, 37 to 57, 66 to 86, 100 to 120, 135 to 155, 186 to 206, 218 to 238, 256 to 276, 282 to 302, and 306 to 326; these read LMVTIIQVIYTIMFLISKAVF, FVFVFYRQAFATIFLAPLAFF, LSFVTFIKIFMLSLFGVTLSL, LAAATTASLPAITFFLALLFG, LVGITVCMGGVIILAIYKGPL, WLKGCVLMITSNILWGLWLVL, LYFTTLHCLLSSIQSFVIAIA, AVIYCGFIVTGVAYYLQSWVI, VFLSMFTPLSLLFTLLSSAIL, and IISLGSIVGGLLLIIGLYCVL. 2 consecutive EamA domains span residues 18 to 136 and 198 to 326; these read IYTI…AKLV and ILWG…YCVL.

Belongs to the drug/metabolite transporter (DMT) superfamily. Plant drug/metabolite exporter (P-DME) (TC 2.A.7.4) family.

Its subcellular location is the membrane. This is WAT1-related protein At5g64700 from Arabidopsis thaliana (Mouse-ear cress).